The sequence spans 352 residues: Chorismate synthase (352 aa).

NADP(+)-binding residues include Arg48 and Arg54. FMN contacts are provided by residues 125–127 (RSS), 238–239 (NA), Gly278, 293–297 (KPTSS), and Arg319.

This sequence belongs to the chorismate synthase family. As to quaternary structure, homotetramer. FMNH2 is required as a cofactor.

It catalyses the reaction 5-O-(1-carboxyvinyl)-3-phosphoshikimate = chorismate + phosphate. Its pathway is metabolic intermediate biosynthesis; chorismate biosynthesis; chorismate from D-erythrose 4-phosphate and phosphoenolpyruvate: step 7/7. Catalyzes the anti-1,4-elimination of the C-3 phosphate and the C-6 proR hydrogen from 5-enolpyruvylshikimate-3-phosphate (EPSP) to yield chorismate, which is the branch point compound that serves as the starting substrate for the three terminal pathways of aromatic amino acid biosynthesis. This reaction introduces a second double bond into the aromatic ring system. The protein is Chorismate synthase of Bordetella petrii (strain ATCC BAA-461 / DSM 12804 / CCUG 43448).